The primary structure comprises 1412 residues: MAHSKTRANDGKITYPPGVKEISDKISKEEMVRRLKMVVKTFMDMDQDSEEEKELYLNLALHLASDFFLKHPDKDVRLLVACCLADIFRIYAPEAPYTSPDKLKDIFMFITRQLKGLEDTKSPQFNRYFYLLENIAWVKSYNICFELEDSNEIFTQLYRTLFSVINNGHNQKVHMHMVDLMSSIICEGDTVSQELLDTVLVNLVPAHKNLNKQAYDLAKALLKRTAQAIEPYITNFFNQVLMLGKTSISDLSEHVFDLILELYNIDSHLLLSVLPQLEFKLKSNDNEERLQVVKLLAKMFGAKDSELASQNKPLWQCYLGRFNDIHVPIRLECVKFASHCLMNHPDLAKDLTEYLKVRSHDPEEAIRHDVIVSIVTAAKKDLLLVNDHLLNFVRERTLDKRWRVRKEAMMGLAQIYKKYSLQSEAGKEAAKQISWIKDKLLHIYYQNSIDDRLLVERIFAQYMVPHNLETNERMKCLYYLYATLDSNAVKALNEMWKCQNLLRHQVKDLVDLIKQPKTDASSKAIFSKVMVITRNLPDPGKAQDFMKKFTQVLEDDEKIRSQLEMLVSPTCSCKQAEGCVREITKKLGNPKQPTNPFLEMIKFLLERIAPVHIDTESISALIKQVNKSIDGTADDEDEGVPTDQAIRAGLELLKVLSFTHPISFHSAETFESLLACLKMDDEKVAEAALQIFKNTGSKIEEDFPHIRSALLPVLHHKAKKGPPRQAKYAIHCINAIFSSKETQFAQIFEPLHKSLDPSNFEHLITPLVTIGHIAMLAPDQFAAPLKSLVATFIVKDLLMNDRLPGKKTTKLWVPDEEVSPETLVKIQAIKMMVRWLLGMKNNHSKSGTSTLRLLTTILHSDGDLTEQGKISKPDMSRLRLAAGSAIVKLAQEPCYHEIITLEQYQLCALAINDECYQVRQIFAQKLHKGLSRLRLPLEYMAICALCAKDPVKERRAHARQCLVKNINVRREYLKQHAAVSEKLLSLLPEYVVPYTIHLLAHDPDYVKVQDIEQLKDIKECLWFILEILMAKNENNSHAFIRKMVENIKQTKDAQGPDDAKMNEKLYTVCDVAMNIIMSKSTTYSLESPKDPVLPARYFTQPDKNFSNTKNYLPPEMKSFFTPGKPKAANVLGAVNKPLSSAGKQSQSKSSRMETVSNASSSSNPSSPGRIKGRLDSTEMDHSENEDFTLSSPLPGKKTDKRDDSDLSELEKPRGRKKPAITDSEEKLSIDDLNKLGQDQKLRGSQRGRKRPAVVSESDETQWQEEKRLKEDVIESEDEQNSPPKKGRRGRPPKPNNGGTPKEEPAAKSSKRSKKKQTSAAAVEEEEEEEERQTENIEQKPKGRQNRSTKRTQQSRAGRSKQAASKENESSEEMDVFQSSSPVSDDVPQEEVMEEEEVSTINVRRRTSKRERR.

An HEAT repeat occupies 383–419 (LLVNDHLLNFVRERTLDKRWRVRKEAMMGLAQIYKKY). The disordered stretch occupies residues 1137–1412 (PLSSAGKQSQ…RRRTSKRERR (276 aa)). 2 stretches are compositionally biased toward low complexity: residues 1139 to 1149 (SSAGKQSQSKS) and 1156 to 1167 (SNASSSSNPSSP). 4 stretches are compositionally biased toward basic and acidic residues: residues 1172-1184 (GRLD…HSEN), 1196-1212 (KKTD…LEKP), 1223-1241 (SEEK…DQKL), and 1263-1272 (QEEKRLKEDV). Acidic residues predominate over residues 1322–1331 (VEEEEEEEER). The span at 1350-1362 (RTQQSRAGRSKQA) shows a compositional bias: polar residues. Residues 1386-1397 (VPQEEVMEEEEV) are compositionally biased toward acidic residues. A compositionally biased stretch (basic residues) spans 1402 to 1412 (VRRRTSKRERR).

As to quaternary structure, interacts with the cohesin complex.

The protein localises to the nucleus. Its function is as follows. Plays a role in androgen-induced proliferative arrest. Required for maintenance of sister chromatid cohesion during mitosis. In Gallus gallus (Chicken), this protein is Sister chromatid cohesion protein PDS5 homolog B (PDS5B).